Reading from the N-terminus, the 570-residue chain is Capsid vertex component 2 (570 aa).

Residues 1 to 54 (MALSGHVLIDPARLPRDTGPELMWAPSLRNSLRVSPEALELAEREAERARSERW) are interaction with major capsid protein/MCP. The interval 102–123 (QVRSPSTGGRSAPAPPSPSPAQ) is disordered.

The protein belongs to the herpesviridae CVC2 protein family. Heterodimerizes with CVC1. Interacts with major capsid protein/MCP and triplex capsid protein 1/TRX1 at the pentamer vertices. Interacts with the large tegument protein/LTP.

It localises to the virion. The protein localises to the host nucleus. In terms of biological role, capsid vertex-specific component that plays a role during viral DNA encapsidation, assuring correct genome cleavage and presumably stabilizing capsids that contain full-length viral genomes. Participates in the interaction between the capsid and the tegument through interaction with the large tegument protein/LTP. The polypeptide is Capsid vertex component 2 (Homo sapiens (Human)).